A 305-amino-acid polypeptide reads, in one-letter code: Acetyl-coenzyme A carboxylase carboxyl transferase subunit alpha (305 aa).

One can recognise a CoA carboxyltransferase C-terminal domain in the interval 33 to 280 (AKLESSTALS…KEQILKDLAD (248 aa)).

The protein belongs to the AccA family. As to quaternary structure, acetyl-CoA carboxylase is a heterohexamer composed of biotin carboxyl carrier protein (AccB), biotin carboxylase (AccC) and two subunits each of ACCase subunit alpha (AccA) and ACCase subunit beta (AccD).

Its subcellular location is the cytoplasm. It carries out the reaction N(6)-carboxybiotinyl-L-lysyl-[protein] + acetyl-CoA = N(6)-biotinyl-L-lysyl-[protein] + malonyl-CoA. The protein operates within lipid metabolism; malonyl-CoA biosynthesis; malonyl-CoA from acetyl-CoA: step 1/1. Component of the acetyl coenzyme A carboxylase (ACC) complex. First, biotin carboxylase catalyzes the carboxylation of biotin on its carrier protein (BCCP) and then the CO(2) group is transferred by the carboxyltransferase to acetyl-CoA to form malonyl-CoA. In Treponema denticola (strain ATCC 35405 / DSM 14222 / CIP 103919 / JCM 8153 / KCTC 15104), this protein is Acetyl-coenzyme A carboxylase carboxyl transferase subunit alpha.